Here is a 508-residue protein sequence, read N- to C-terminus: Photosystem II CP47 reaction center protein (508 aa).

Helical transmembrane passes span 21–36 (AVHL…WAGS), 101–115 (ILLS…IWHW), 140–156 (GIHL…FGAF), 203–218 (IAAG…FHLS), 237–252 (VLSS…AFVV), and 457–472 (WFAL…HGAR).

The protein belongs to the PsbB/PsbC family. PsbB subfamily. PSII is composed of 1 copy each of membrane proteins PsbA, PsbB, PsbC, PsbD, PsbE, PsbF, PsbH, PsbI, PsbJ, PsbK, PsbL, PsbM, PsbT, PsbX, PsbY, PsbZ, Psb30/Ycf12, at least 3 peripheral proteins of the oxygen-evolving complex and a large number of cofactors. It forms dimeric complexes. It depends on Binds multiple chlorophylls. PSII binds additional chlorophylls, carotenoids and specific lipids. as a cofactor.

The protein resides in the plastid. Its subcellular location is the chloroplast thylakoid membrane. One of the components of the core complex of photosystem II (PSII). It binds chlorophyll and helps catalyze the primary light-induced photochemical processes of PSII. PSII is a light-driven water:plastoquinone oxidoreductase, using light energy to abstract electrons from H(2)O, generating O(2) and a proton gradient subsequently used for ATP formation. This chain is Photosystem II CP47 reaction center protein, found in Nephroselmis olivacea (Green alga).